The sequence spans 447 residues: Chorismate synthase, chloroplastic (447 aa).

Positions 1 to 24 (MASSLSTKPFLSGSRRRSTTDGSG) are disordered. The transit peptide at 1–57 (MASSLSTKPFLSGSRRRSTTDGSGWSYFQTSDLRQLSNQSVQISVRRQTAPLKLVVQ) directs the protein to the chloroplast.

Belongs to the chorismate synthase family. In terms of assembly, homotetramer. It depends on FMNH2 as a cofactor. In terms of processing, the N-terminus is blocked.

Its subcellular location is the plastid. It is found in the chloroplast. It catalyses the reaction 5-O-(1-carboxyvinyl)-3-phosphoshikimate = chorismate + phosphate. It functions in the pathway metabolic intermediate biosynthesis; chorismate biosynthesis; chorismate from D-erythrose 4-phosphate and phosphoenolpyruvate: step 7/7. In terms of biological role, catalyzes the last common step of the biosynthesis of aromatic amino acids, produced via the shikimic acid pathway. The protein is Chorismate synthase, chloroplastic of Capnoides sempervirens (Rock-harlequin).